A 154-amino-acid chain; its full sequence is Endoribonuclease YbeY (154 aa).

Zn(2+) contacts are provided by His113, His117, and His123.

This sequence belongs to the endoribonuclease YbeY family. Requires Zn(2+) as cofactor.

The protein resides in the cytoplasm. Single strand-specific metallo-endoribonuclease involved in late-stage 70S ribosome quality control and in maturation of the 3' terminus of the 16S rRNA. In Vibrio vulnificus (strain CMCP6), this protein is Endoribonuclease YbeY.